The following is a 566-amino-acid chain: Putative ABC transporter ATP-binding protein BT9727_2424 (566 aa).

ABC transporter domains follow at residues 5–246 (ISFE…GLRE) and 300–533 (LKVE…ANLK). Residues 39 to 46 (GRSGSGKS) and 333 to 340 (GHNGAGKS) contribute to the ATP site.

It belongs to the ABC transporter superfamily.

It is found in the cell membrane. Functionally, probably part of an ABC transporter complex. Responsible for energy coupling to the transport system. The polypeptide is Putative ABC transporter ATP-binding protein BT9727_2424 (Bacillus thuringiensis subsp. konkukian (strain 97-27)).